Here is a 359-residue protein sequence, read N- to C-terminus: 3-dehydroquinate synthase (359 aa).

Residues 69-74 (DGEQHK), 103-107 (GVIGD), 127-128 (TT), K140, K149, and 167-170 (TLDT) contribute to the NAD(+) site. Positions 182, 245, and 262 each coordinate Zn(2+).

The protein belongs to the sugar phosphate cyclases superfamily. Dehydroquinate synthase family. It depends on Co(2+) as a cofactor. Zn(2+) serves as cofactor. NAD(+) is required as a cofactor.

Its subcellular location is the cytoplasm. It carries out the reaction 7-phospho-2-dehydro-3-deoxy-D-arabino-heptonate = 3-dehydroquinate + phosphate. The protein operates within metabolic intermediate biosynthesis; chorismate biosynthesis; chorismate from D-erythrose 4-phosphate and phosphoenolpyruvate: step 2/7. Its function is as follows. Catalyzes the conversion of 3-deoxy-D-arabino-heptulosonate 7-phosphate (DAHP) to dehydroquinate (DHQ). The polypeptide is 3-dehydroquinate synthase (Nitrosococcus oceani (strain ATCC 19707 / BCRC 17464 / JCM 30415 / NCIMB 11848 / C-107)).